Here is a 341-residue protein sequence, read N- to C-terminus: NADH-quinone oxidoreductase subunit H 1 (341 aa).

The next 9 membrane-spanning stretches (helical) occupy residues 7–27 (IILT…ISLL), 46–66 (PNVV…KYIF), 80–100 (FFLA…VIPF), 111–131 (VAIL…IMGG), 157–177 (LGLI…SHIV), 183–203 (AFGL…LFFI), 244–264 (YIAI…GWLS), 273–293 (VFWM…VKAI), and 305–325 (IGWK…AFLA).

It belongs to the complex I subunit 1 family. NDH-1 is composed of 14 different subunits. Subunits NuoA, H, J, K, L, M, N constitute the membrane sector of the complex.

It localises to the cell inner membrane. The enzyme catalyses a quinone + NADH + 5 H(+)(in) = a quinol + NAD(+) + 4 H(+)(out). In terms of biological role, NDH-1 shuttles electrons from NADH, via FMN and iron-sulfur (Fe-S) centers, to quinones in the respiratory chain. The immediate electron acceptor for the enzyme in this species is believed to be ubiquinone. Couples the redox reaction to proton translocation (for every two electrons transferred, four hydrogen ions are translocated across the cytoplasmic membrane), and thus conserves the redox energy in a proton gradient. This subunit may bind ubiquinone. The polypeptide is NADH-quinone oxidoreductase subunit H 1 (Cereibacter sphaeroides (strain ATCC 17029 / ATH 2.4.9) (Rhodobacter sphaeroides)).